An 811-amino-acid chain; its full sequence is MAPILFLPILQILLIYCTKSAQAQLNISIGSSLTPQEVNNSWISPSSDFAFGFRAVDGNSSSYLLAVWFNKIADKTVIWYAKTSSNGQDDTIPVQVQSGSVLKLADGALSLRDPSGNEVWNPRVTDVGYARMLNTGNFRLLGTDGATKWESFGDPSDTILPTQVLPLGTALHSRLLATDYSNGRFQLNVQDDGNLVLYLVAVPSAYYHDPYWASNTVGNGSQLVFNETGRIYFTLTNGSQINITSAGVDSMGDFFHRATLDTDGVFRQYIYPKSKQARSLWQEQWRAVDALPENICQTIQTKVGSGACGFNSYCTFDGTKNTTNCLCPQRYKFFDNERTYKGCRPDFEPQSCDLDETAAMVQYEMTPIDRINWPLSDYEQYSPIDETECRRLCVIDCFCSVAVFNKPSNTCYKKKLPLSNGNMDSSLQATVLLKVPRSTNSPSMISSGSSKWKKDKKYWILGSSLFFGSSVLVNFLLIFVLLFGTYCSITSRKKTQLSQLPSNSGLPSKIFTYRELEKATGGFHEVLGTGASGIVYKGQLQDECGTNIAVKKIEKLQQEAQKEFLVEVQTIGQTFHRNLVRLLGFCNEGTEKLLVYEFMSNGSLNTFLFNDTHPHWSLRVQVALGVSRGLLYLHEECNKQIIHCDMKPQNILLDDNFVAKISDFGLAKLLPVNQTQTNTGIRGTRGYVAPEWFKNIGITSKVDVYSFGVILLELVCCRKNVELEVADEEQTILTYWANDCYRCGRIDLLVAGDDEAIFNIKKVERFVAVALWCLQEEPSMRPTMHKVMQMLDGAVQIPTPPDPSSYISSLA.

Residues Met1–Ala23 form the signal peptide. One can recognise a Bulb-type lectin domain in the interval Gln24–Gly153. The Extracellular segment spans residues Gln24 to Ser464. N-linked (GlcNAc...) asparagine glycosylation is found at Asn26, Asn39, Asn59, Asn219, Asn226, Asn237, and Asn242. Residues Pro292–Arg344 form the EGF-like; atypical domain. 5 disulfide bridges follow: Cys296–Cys314, Cys308–Cys325, Cys327–Cys343, Cys389–Cys411, and Cys393–Cys399. N-linked (GlcNAc...) asparagine glycosylation occurs at Asn321. The region spanning Cys352 to Pro436 is the PAN domain. The helical transmembrane segment at Leu465–Thr485 threads the bilayer. The Cytoplasmic segment spans residues Tyr486 to Ala811. One can recognise a Protein kinase domain in the interval Gly521–Val795. ATP is bound by residues Leu527 to Val535 and Lys551. Residue Asp645 is the Proton acceptor of the active site.

This sequence belongs to the protein kinase superfamily. Ser/Thr protein kinase family.

It is found in the membrane. It catalyses the reaction L-seryl-[protein] + ATP = O-phospho-L-seryl-[protein] + ADP + H(+). The catalysed reaction is L-threonyl-[protein] + ATP = O-phospho-L-threonyl-[protein] + ADP + H(+). Involved in resistance against the herbivorous insect brown planthopper (N.lugens, BPH). Member of the BPH3 (BPH resistance locus 3) cluster which contains LECRK1, LECRK2 and LECRK3. The chain is G-type lectin S-receptor-like serine/threonine-protein kinase LECRK2 from Oryza sativa subsp. indica (Rice).